Here is a 291-residue protein sequence, read N- to C-terminus: G1/S-specific cyclin-D1 (291 aa).

The residue at position 282 (threonine 282) is a Phosphothreonine.

Belongs to the cyclin family. Cyclin D subfamily. Interacts with the cdk4 and cdk6 protein kinases to form a serine/threonine kinase holoenzyme complex. The cyclin subunit imparts substrate specificity to the complex. Phosphorylation at Thr-282 by MAP kinases is required for ubiquitination and degradation by the DCX(AMBRA1) complex. Post-translationally, ubiquitinated by the DCX(AMBRA1) complex during the transition from G1 to S cell phase, leading to its degradation. The DCX(AMBRA1) complex represents the major regulator of CCND1 stability during the G1/S transition.

The protein localises to the nucleus. It is found in the cytoplasm. Its function is as follows. Regulatory component of the cyclin D1-CDK4 (DC) complex that phosphorylates and inhibits members of the retinoblastoma (RB) protein family including RB1 and regulates the cell-cycle during G(1)/S transition. Phosphorylation of RB1 allows dissociation of the transcription factor E2F from the RB/E2F complex and the subsequent transcription of E2F target genes which are responsible for the progression through the G(1) phase. Hypophosphorylates RB1 in early G(1) phase. Cyclin D-CDK4 complexes are major integrators of various mitogenenic and antimitogenic signals. The chain is G1/S-specific cyclin-D1 (ccnd1) from Xenopus laevis (African clawed frog).